We begin with the raw amino-acid sequence, 383 residues long: Acetyl-CoA acetyltransferase (383 aa).

Catalysis depends on cysteine 85, which acts as the Acyl-thioester intermediate. CoA-binding residues include cysteine 206, serine 207, isoleucine 209, and lysine 328. The active-site Proton acceptor is the histidine 332.

Belongs to the thiolase-like superfamily. Thiolase family. Interacts with HMG-CoA synthase (HMGCS) that catalyzes the second step in the pathway and with a DUF35 protein. The acetoacetyl-CoA thiolase/HMG-CoA synthase complex channels the intermediate via a fused CoA-binding site, which allows for efficient coupling of the endergonic thiolase reaction with the exergonic HMGCS reaction.

It catalyses the reaction 2 acetyl-CoA = acetoacetyl-CoA + CoA. The protein operates within metabolic intermediate biosynthesis; (R)-mevalonate biosynthesis; (R)-mevalonate from acetyl-CoA: step 1/3. Functionally, catalyzes the condensation of two acetyl-coA molecules into acetoacetyl-CoA. Functions in the mevalonate (MVA) pathway leading to isopentenyl diphosphate (IPP), a key precursor for the biosynthesis of isoprenoid compounds that are building blocks of archaeal membrane lipids. This Methanothermobacter thermautotrophicus (strain ATCC 29096 / DSM 1053 / JCM 10044 / NBRC 100330 / Delta H) (Methanobacterium thermoautotrophicum) protein is Acetyl-CoA acetyltransferase.